The following is an 846-amino-acid chain: Outer membrane channel protein CpnT (846 aa).

The NTD stretch occupies residues 1 to 443 (MAPLAVDPAA…AGVRGLKERL (443 aa)). A disordered region spans residues 442-630 (RLEPTTPHLE…SGSEPPGLHA (189 aa)). 2 stretches are compositionally biased toward pro residues: residues 450 to 466 (LEPP…PPRI) and 475 to 504 (APAP…PPVD). Low complexity-rich tracts occupy residues 508 to 517 (EPVAPSSASA) and 562 to 586 (APAT…HSTP). Residues 651–846 (RLSDEAVDPQ…ELIRRGVLRQ (196 aa)) form a TNT region. Positions 751-846 (YGPQLDRIGG…ELIRRGVLRQ (96 aa)) constitute a TNT domain. The active site involves arginine 757. Position 780 (arginine 780) interacts with NAD(+). Glutamine 822 is an active-site residue.

As to quaternary structure, interacts with the immunity factor for TNT (IFT) homolog. In terms of processing, the C-terminal domain (TNT) is probably cleaved.

It is found in the cell outer membrane. The protein resides in the secreted. The protein localises to the cell surface. It carries out the reaction NAD(+) + H2O = ADP-D-ribose + nicotinamide + H(+). Its activity is regulated as follows. Glycohydrolase activity is completely inhibited by interaction with the immunity factor for TNT (IFT) homolog. This inhibition protects M.bovis from self-poisoning. Its function is as follows. The N-terminal domain (NTD) forms an outer membrane channel and is used for uptake of nutrients across the outer membrane. Also confers susceptibility to structurally different antibiotics and antituberculosis drugs, and to toxic immune factors such as nitric oxide (NO). The C-terminal domain (TNT) is dispensable for normal growth in macrophages. The chain is Outer membrane channel protein CpnT from Mycobacterium bovis (strain BCG / Pasteur 1173P2).